The chain runs to 113 residues: MAKTVRKARDPLIPGEITTQPGEIELNVGRKTKTLKVANGGDRPIQIGSHFHFYEVNSAMKFDREEAYGMRLNIMAGTAVRFEPGQERTVELVELAGNRIVYGFNQKVMGKLK.

It belongs to the urease beta subunit family. In terms of assembly, heterotrimer of UreA (gamma), UreB (beta) and UreC (alpha) subunits. Three heterotrimers associate to form the active enzyme.

It is found in the cytoplasm. The catalysed reaction is urea + 2 H2O + H(+) = hydrogencarbonate + 2 NH4(+). The protein operates within nitrogen metabolism; urea degradation; CO(2) and NH(3) from urea (urease route): step 1/1. This chain is Urease subunit beta, found in Nitrosospira multiformis (strain ATCC 25196 / NCIMB 11849 / C 71).